Here is a 179-residue protein sequence, read N- to C-terminus: Ribulose bisphosphate carboxylase small subunit, chloroplastic 2 (179 aa).

The transit peptide at 1 to 58 directs the protein to the chloroplast; it reads MASSATMLSSVATAACVAPAQASMVAPFVGLKSASAFPVTQKTVTGLSTLPSNGGRVQ.

The protein belongs to the RuBisCO small chain family. Heterohexadecamer of 8 large and 8 small subunits.

Its subcellular location is the plastid. The protein localises to the chloroplast. RuBisCO catalyzes two reactions: the carboxylation of D-ribulose 1,5-bisphosphate, the primary event in carbon dioxide fixation, as well as the oxidative fragmentation of the pentose substrate. Both reactions occur simultaneously and in competition at the same active site. Although the small subunit is not catalytic it is essential for maximal activity. The polypeptide is Ribulose bisphosphate carboxylase small subunit, chloroplastic 2 (Fritillaria agrestis (Stinkbells)).